Reading from the N-terminus, the 886-residue chain is Valine--tRNA ligase (886 aa).

The short motif at 53–63 (PNVTGSLHMGH) is the 'HIGH' region element. The short motif at 540–544 (KMSKS) is the 'KMSKS' region element. Lys543 contacts ATP. A coiled-coil region spans residues 820-851 (IDVAAERRRMEKDLAAAQKELASTAAKLANAD).

The protein belongs to the class-I aminoacyl-tRNA synthetase family. ValS type 1 subfamily. Monomer.

The protein localises to the cytoplasm. It carries out the reaction tRNA(Val) + L-valine + ATP = L-valyl-tRNA(Val) + AMP + diphosphate. In terms of biological role, catalyzes the attachment of valine to tRNA(Val). As ValRS can inadvertently accommodate and process structurally similar amino acids such as threonine, to avoid such errors, it has a 'posttransfer' editing activity that hydrolyzes mischarged Thr-tRNA(Val) in a tRNA-dependent manner. This is Valine--tRNA ligase from Mycobacterium leprae (strain TN).